Consider the following 526-residue polypeptide: Peptide chain release factor 3 (526 aa).

Positions 9–277 (DKRRTFAIIS…GIVEWAPKPQ (269 aa)) constitute a tr-type G domain. GTP is bound by residues 18–25 (SHPDAGKT), 86–90 (DTPGH), and 140–143 (NKLD).

The protein belongs to the TRAFAC class translation factor GTPase superfamily. Classic translation factor GTPase family. PrfC subfamily.

The protein localises to the cytoplasm. Its function is as follows. Increases the formation of ribosomal termination complexes and stimulates activities of RF-1 and RF-2. It binds guanine nucleotides and has strong preference for UGA stop codons. It may interact directly with the ribosome. The stimulation of RF-1 and RF-2 is significantly reduced by GTP and GDP, but not by GMP. The protein is Peptide chain release factor 3 of Shewanella woodyi (strain ATCC 51908 / MS32).